The chain runs to 309 residues: Taste receptor type 2 member 124 (309 aa).

Over 1–7 (MVPVLHS) the chain is Extracellular. The chain crosses the membrane as a helical span at residues 8 to 28 (LSTIILIAEFVWGNLSNGLIV). At 29-46 (LKNCIDWINKKELSTVDQ) the chain is on the cytoplasmic side. Residues 47 to 67 (ILIVLAISRISLIWETLIIWV) traverse the membrane as a helical segment. The Extracellular segment spans residues 68-86 (KDQLISSITIEELKIIVFS). The chain crosses the membrane as a helical span at residues 87–107 (FILSSHFSLWLATALSIFYLF). Topologically, residues 108-127 (RIPNCYWQIFLYLKWRIKQL) are cytoplasmic. The helical transmembrane segment at 128–148 (IVHMLLGSLVFLVANMIQITI) threads the bilayer. At 149–183 (TLEERFYQYGGNTSVNSMETEFSILIELMLFNMTM) the chain is on the extracellular side. Asn-160 and Asn-180 each carry an N-linked (GlcNAc...) asparagine glycan. The chain crosses the membrane as a helical span at residues 184–204 (FSIIPFSLALISFLLLIFSLW). At 205–230 (KHLQKMPLNSRGDRDPSATAHRNALR) the chain is on the cytoplasmic side. The chain crosses the membrane as a helical span at residues 231–251 (ILVSFLLLYTIYFLSLLISWV). Residues 252–261 (AQKNQSELVH) are Extracellular-facing. Asn-255 carries N-linked (GlcNAc...) asparagine glycosylation. The chain crosses the membrane as a helical span at residues 262 to 282 (IICMITSLVYPSFHSYILILG). Topologically, residues 283–309 (NYKLKQTSLWVMRQLGCRMKRQNTPTT) are cytoplasmic.

It belongs to the G-protein coupled receptor T2R family.

The protein localises to the membrane. Functionally, putative taste receptor which may play a role in the perception of bitterness. The polypeptide is Taste receptor type 2 member 124 (Mus musculus (Mouse)).